A 457-amino-acid chain; its full sequence is Acetylcholine receptor subunit alpha-1-A (457 aa).

Residues 1 to 20 (MDFVLTRLILLFLAATIIYS) form the signal peptide. The Extracellular segment spans residues 21 to 230 (SEDESRLIND…ITYHFLLQRL (210 aa)). Intrachain disulfides connect Cys148/Cys162 and Cys212/Cys213. Residue Asn161 is glycosylated (N-linked (GlcNAc...) asparagine). 3 consecutive transmembrane segments (helical) span residues 231–255 (PLYFIVNVVIPCLLFSFLTGLVFYL), 263–281 (ITLSVSVLLSLVVFLLVIV), and 297–316 (YMLFTMVFVIASIVITVIVI). At 317–428 (NTHHRSPSTH…WKFVAMVLDH (112 aa)) the chain is on the cytoplasmic side. The helical transmembrane segment at 429 to 447 (LLLAVFMIVCIIGTLAIFA) threads the bilayer.

The protein belongs to the ligand-gated ion channel (TC 1.A.9) family. Acetylcholine receptor (TC 1.A.9.1) subfamily. Alpha-1/CHRNA1 sub-subfamily. One of the alpha chains that assemble within the acetylcholine receptor, a pentamer of two alpha chains, a beta, a delta, and a gamma or epsilon chains. As to expression, oocytes.

Its subcellular location is the postsynaptic cell membrane. It is found in the cell membrane. It carries out the reaction K(+)(in) = K(+)(out). The catalysed reaction is Na(+)(in) = Na(+)(out). Its function is as follows. Upon acetylcholine binding, the AChR responds by an extensive change in conformation that affects all subunits and leads to opening of an ion-conducting channel across the plasma membrane. The polypeptide is Acetylcholine receptor subunit alpha-1-A (chrna1-a) (Xenopus laevis (African clawed frog)).